Reading from the N-terminus, the 854-residue chain is DNA topoisomerase 1 type prokaryotic (854 aa).

The Toprim domain maps to 2 to 110; that stretch reads SILILLESPG…KRLRFNAITK (109 aa). Positions 8 and 79 each coordinate Mg(2+). The region spanning 124–610 is the Topo IA-type catalytic domain; that stretch reads DKNLVDAQKA…DFYDKLKPIV (487 aa). Positions 158–163 are interaction with DNA; the sequence is SAGRVQ. Residue tyrosine 302 is the O-(5'-phospho-DNA)-tyrosine intermediate of the active site. The segment at 802-854 is disordered; it reads KSAPKGGSKTIRKPSQTKYSQTKSTKSTKSTKSTNKKFVGKSAKKTTKKTTKK. The segment covering 814 to 834 has biased composition (low complexity); it reads KPSQTKYSQTKSTKSTKSTKS. The segment covering 835–854 has biased composition (basic residues); the sequence is TNKKFVGKSAKKTTKKTTKK.

The protein belongs to the type IA topoisomerase family. Mg(2+) is required as a cofactor.

It localises to the virion. The enzyme catalyses ATP-independent breakage of single-stranded DNA, followed by passage and rejoining.. In terms of biological role, releases the supercoiling and torsional tension of DNA, which is introduced during the DNA replication and transcription, by transiently cleaving and rejoining one strand of the DNA duplex. Introduces a single-strand break via transesterification at a target site in duplex DNA. The scissile phosphodiester is attacked by the catalytic tyrosine of the enzyme, resulting in the formation of a DNA-(5'-phosphotyrosyl)-enzyme intermediate and the expulsion of a 3'-OH DNA strand. The free DNA strand then undergoes passage around the unbroken strand, thus removing DNA supercoils. Finally, in the religation step, the DNA 3'-OH attacks the covalent intermediate to expel the active-site tyrosine and restore the DNA phosphodiester backbone. In Acanthamoeba polyphaga (Amoeba), this protein is DNA topoisomerase 1 type prokaryotic (TOP1P).